A 298-amino-acid polypeptide reads, in one-letter code: 3-sulfolactaldehyde reductase (298 aa).

Residues 11–12 (QM), Asp31, Leu65, and Thr96 each bind NAD(+). Arg123 lines the 2,3-dihydroxypropane-1-sulfonate pocket. Lys171 is a catalytic residue. 174-178 (NNYMS) is a 2,3-dihydroxypropane-1-sulfonate binding site. An NAD(+)-binding site is contributed by Lys240.

The protein belongs to the HIBADH-related family. 3-sulfolactaldehyde reductase subfamily. As to quaternary structure, homotetramer. Dimer of dimers.

It catalyses the reaction (2S)-3-sulfopropanediol + NAD(+) = (2S)-3-sulfolactaldehyde + NADH + H(+). The enzyme catalyses 4-hydroxybutanoate + NAD(+) = succinate semialdehyde + NADH + H(+). With respect to regulation, inhibited by the NADH analogs tetrahydro-NADH and hexahydro-NADH. Functionally, reduces 3-sulfolactaldehyde (SLA) to 2,3-dihydroxypropane 1-sulfonate (DHPS). Metabolite profiling studies showed that the enzyme also catalyzes in vitro the NADH-dependent reduction of succinic semialdehyde (SSA) to 4-hydroxybutyrate (GHB), and that it could be involved in the metabolism of SSA, and other potentially toxic intermediates that may accumulate under stress conditions. However, the enzyme exhibits a 42,000-fold greater catalytic efficiency for the reduction of SLA over SSA. Shows no detectable activity on the analogous glycolytic intermediate glyceraldehyde-3-phosphate. This Escherichia coli (strain K12) protein is 3-sulfolactaldehyde reductase (yihU).